We begin with the raw amino-acid sequence, 302 residues long: Beta-1,2-mannobiose phosphorylase (302 aa).

The protein belongs to the glycosyl hydrolase 130 family. In terms of assembly, monomer.

It catalyses the reaction beta-D-mannopyranosyl-(1-&gt;2)-D-mannopyranose + phosphate = alpha-D-mannose 1-phosphate + D-mannose. It participates in nucleotide-sugar biosynthesis; GDP-alpha-D-mannose biosynthesis. Probably involved in a salvage pathway for GDP-D-mannose biosynthesis. Catalyzes the reversible phosphorolysis of 1,2-beta-oligomannan. In phosphorolytic reactions, prefers beta-1,2-mannobiose (beta-1,2-Man2) as substrate. Produces alpha-D-mannose 1-phosphate, which is the precursor of GDP-D-mannose. This Thermoanaerobacter sp. (strain X514) protein is Beta-1,2-mannobiose phosphorylase.